A 475-amino-acid polypeptide reads, in one-letter code: Aspartyl/glutamyl-tRNA(Asn/Gln) amidotransferase subunit B (475 aa).

This sequence belongs to the GatB/GatE family. GatB subfamily. Heterotrimer of A, B and C subunits.

It catalyses the reaction L-glutamyl-tRNA(Gln) + L-glutamine + ATP + H2O = L-glutaminyl-tRNA(Gln) + L-glutamate + ADP + phosphate + H(+). The enzyme catalyses L-aspartyl-tRNA(Asn) + L-glutamine + ATP + H2O = L-asparaginyl-tRNA(Asn) + L-glutamate + ADP + phosphate + 2 H(+). Allows the formation of correctly charged Asn-tRNA(Asn) or Gln-tRNA(Gln) through the transamidation of misacylated Asp-tRNA(Asn) or Glu-tRNA(Gln) in organisms which lack either or both of asparaginyl-tRNA or glutaminyl-tRNA synthetases. The reaction takes place in the presence of glutamine and ATP through an activated phospho-Asp-tRNA(Asn) or phospho-Glu-tRNA(Gln). The protein is Aspartyl/glutamyl-tRNA(Asn/Gln) amidotransferase subunit B of Staphylococcus aureus (strain MRSA252).